The sequence spans 109 residues: Thioredoxin-like protein slr1139 (109 aa).

In terms of domain architecture, Thioredoxin spans 2–107 (SLLEITDAEF…LLELLKEELD (106 aa)). Cysteine 31 and cysteine 34 are joined by a disulfide.

This sequence belongs to the thioredoxin family.

In Synechocystis sp. (strain ATCC 27184 / PCC 6803 / Kazusa), this protein is Thioredoxin-like protein slr1139.